The primary structure comprises 616 residues: Dihydroxy-acid dehydratase (616 aa).

D81 serves as a coordination point for Mg(2+). Position 122 (C122) interacts with [2Fe-2S] cluster. D123 and K124 together coordinate Mg(2+). Residue K124 is modified to N6-carboxylysine. Position 196 (C196) interacts with [2Fe-2S] cluster. Residue E496 coordinates Mg(2+). The active-site Proton acceptor is S522.

The protein belongs to the IlvD/Edd family. In terms of assembly, homodimer. Requires [2Fe-2S] cluster as cofactor. Mg(2+) is required as a cofactor.

The catalysed reaction is (2R)-2,3-dihydroxy-3-methylbutanoate = 3-methyl-2-oxobutanoate + H2O. It carries out the reaction (2R,3R)-2,3-dihydroxy-3-methylpentanoate = (S)-3-methyl-2-oxopentanoate + H2O. It functions in the pathway amino-acid biosynthesis; L-isoleucine biosynthesis; L-isoleucine from 2-oxobutanoate: step 3/4. It participates in amino-acid biosynthesis; L-valine biosynthesis; L-valine from pyruvate: step 3/4. In terms of biological role, functions in the biosynthesis of branched-chain amino acids. Catalyzes the dehydration of (2R,3R)-2,3-dihydroxy-3-methylpentanoate (2,3-dihydroxy-3-methylvalerate) into 2-oxo-3-methylpentanoate (2-oxo-3-methylvalerate) and of (2R)-2,3-dihydroxy-3-methylbutanoate (2,3-dihydroxyisovalerate) into 2-oxo-3-methylbutanoate (2-oxoisovalerate), the penultimate precursor to L-isoleucine and L-valine, respectively. The sequence is that of Dihydroxy-acid dehydratase from Streptomyces griseus subsp. griseus (strain JCM 4626 / CBS 651.72 / NBRC 13350 / KCC S-0626 / ISP 5235).